The sequence spans 332 residues: Glycerol-3-phosphate dehydrogenase [NAD(P)+] (332 aa).

5 residues coordinate NADPH: Ser-11, Trp-12, Arg-32, Arg-33, and Lys-106. Residues Lys-106 and Gly-136 each contribute to the sn-glycerol 3-phosphate site. Ala-140 is an NADPH binding site. Sn-glycerol 3-phosphate contacts are provided by Lys-191, Asp-244, Ser-254, Arg-255, and Asn-256. Lys-191 functions as the Proton acceptor in the catalytic mechanism. Residue Arg-255 coordinates NADPH. The NADPH site is built by Val-280 and Glu-282.

Belongs to the NAD-dependent glycerol-3-phosphate dehydrogenase family.

It is found in the cytoplasm. It carries out the reaction sn-glycerol 3-phosphate + NAD(+) = dihydroxyacetone phosphate + NADH + H(+). It catalyses the reaction sn-glycerol 3-phosphate + NADP(+) = dihydroxyacetone phosphate + NADPH + H(+). Its pathway is membrane lipid metabolism; glycerophospholipid metabolism. In terms of biological role, catalyzes the reduction of the glycolytic intermediate dihydroxyacetone phosphate (DHAP) to sn-glycerol 3-phosphate (G3P), the key precursor for phospholipid synthesis. This Corynebacterium jeikeium (strain K411) protein is Glycerol-3-phosphate dehydrogenase [NAD(P)+].